A 497-amino-acid polypeptide reads, in one-letter code: MAYLLALDQGTSSSRSIVFDEEGRVVALAQRELPQIYPRPGWVEHDPMEIWRGQLATARQALASVGLAAWDIRAMGITNQRETTVLWNRRTGQPVHHAIVWQDRRAESTCAQLREQGHEALIQAKTGLLIDAYFSGTKLKWLLDNVAGVRAQAERGELAFGTIDSWLIWQLTGGTVHATDVSNASRTMLFNVRTNQWDAELLDLLGIPASLMPEVKPSSAHYGEVRPELLGHAIPIGGVAGDQQSALFGQACFRAGMAKNTYGTGCFLLMHTGAQFQASKNGLLTTSAAQTTAQTEFALEGSVFVGGAVVQWLRDGLHAIQGSAEVEALAQSVPDSGGVMMVPAFTGLGAPYWKPEARGTITGLTRGTTMAHIARAALESIAYQSAALLLAMSRDAVAAGAAPLAELRVDGGASSNDLLMQFQADLLGIPVIRPAVTETTALGAAWLAGLSSGVYGSTDELSSLWRAERTFLPTLSTGRAAELMAQWEHAVRQTVLA.

ADP is bound at residue Thr11. ATP contacts are provided by Thr11, Ser12, and Ser13. Thr11 is a sn-glycerol 3-phosphate binding site. Arg15 serves as a coordination point for ADP. Residues Arg81, Glu82, Tyr133, and Asp242 each coordinate sn-glycerol 3-phosphate. Glycerol is bound by residues Arg81, Glu82, Tyr133, Asp242, and Gln243. Residues Thr264 and Gly307 each contribute to the ADP site. ATP is bound by residues Thr264, Gly307, Gln311, and Gly412. ADP is bound by residues Gly412 and Asn416.

Belongs to the FGGY kinase family.

The catalysed reaction is glycerol + ATP = sn-glycerol 3-phosphate + ADP + H(+). The protein operates within polyol metabolism; glycerol degradation via glycerol kinase pathway; sn-glycerol 3-phosphate from glycerol: step 1/1. Inhibited by fructose 1,6-bisphosphate (FBP). In terms of biological role, key enzyme in the regulation of glycerol uptake and metabolism. Catalyzes the phosphorylation of glycerol to yield sn-glycerol 3-phosphate. The sequence is that of Glycerol kinase from Polaromonas naphthalenivorans (strain CJ2).